Consider the following 179-residue polypeptide: Large ribosomal subunit protein bL9 (179 aa).

The protein belongs to the bacterial ribosomal protein bL9 family.

In terms of biological role, binds to the 23S rRNA. This Bartonella bacilliformis (strain ATCC 35685 / KC583 / Herrer 020/F12,63) protein is Large ribosomal subunit protein bL9.